Here is a 108-residue protein sequence, read N- to C-terminus: uncharacterized protein (108 aa).

Residues Leu10–Phe32 form a helical membrane-spanning segment.

The protein resides in the membrane. This is an uncharacterized protein from Saccharomyces cerevisiae (strain ATCC 204508 / S288c) (Baker's yeast).